The primary structure comprises 376 residues: Putative F-box protein At2g33200 (376 aa).

The F-box domain maps to 6–53 (YDWSKLCHDILRLILESLHYKDYHRARTVCSNWYTASTTCKRPLYPWR).

This Arabidopsis thaliana (Mouse-ear cress) protein is Putative F-box protein At2g33200.